Consider the following 269-residue polypeptide: Formamidopyrimidine-DNA glycosylase (269 aa).

The active-site Schiff-base intermediate with DNA is Pro2. The Proton donor role is filled by Glu3. Lys57 (proton donor; for beta-elimination activity) is an active-site residue. DNA-binding residues include His90, Arg109, and Lys150. The FPG-type zinc-finger motif lies at 235-269 (QVYGRKGEPCRVCGTPIAATKHAQRATFYCRHCQK). Arg259 (proton donor; for delta-elimination activity) is an active-site residue.

It belongs to the FPG family. In terms of assembly, monomer. Zn(2+) is required as a cofactor.

The catalysed reaction is Hydrolysis of DNA containing ring-opened 7-methylguanine residues, releasing 2,6-diamino-4-hydroxy-5-(N-methyl)formamidopyrimidine.. It catalyses the reaction 2'-deoxyribonucleotide-(2'-deoxyribose 5'-phosphate)-2'-deoxyribonucleotide-DNA = a 3'-end 2'-deoxyribonucleotide-(2,3-dehydro-2,3-deoxyribose 5'-phosphate)-DNA + a 5'-end 5'-phospho-2'-deoxyribonucleoside-DNA + H(+). Functionally, involved in base excision repair of DNA damaged by oxidation or by mutagenic agents. Acts as a DNA glycosylase that recognizes and removes damaged bases. Has a preference for oxidized purines, such as 7,8-dihydro-8-oxoguanine (8-oxoG). Has AP (apurinic/apyrimidinic) lyase activity and introduces nicks in the DNA strand. Cleaves the DNA backbone by beta-delta elimination to generate a single-strand break at the site of the removed base with both 3'- and 5'-phosphates. The chain is Formamidopyrimidine-DNA glycosylase from Salmonella paratyphi B (strain ATCC BAA-1250 / SPB7).